Consider the following 77-residue polypeptide: U8-lycotoxin-Ls1m (77 aa).

Positions 1 to 20 (MKLMIFTGLVLFAIVSLIEA) are cleaved as a signal peptide. Positions 21-26 (QAENEK) are excised as a propeptide.

It belongs to the neurotoxin 19 (CSTX) family. 08 (U8-Lctx) subfamily. In terms of processing, contains 4 disulfide bonds. In terms of tissue distribution, expressed by the venom gland.

It is found in the secreted. This is U8-lycotoxin-Ls1m from Lycosa singoriensis (Wolf spider).